The primary structure comprises 326 residues: Homeobox protein Hox-A1 (326 aa).

The short motif at 196–201 is the Antp-type hexapeptide element; sequence TFDWMK. The segment at residues 221 to 280 is a DNA-binding region (homeobox); that stretch reads PNTVRTNFTTKQLTELEKEFHFNKYLTRARRVEIAAALQLNETQVKIWFQNRRMKQKKRE. The interval 273 to 326 is disordered; the sequence is RMKQKKREKEGLTSASPATPGSEANTEDTSDKCNSTSSTPSPSSSTSETINTSG. The span at 285 to 296 shows a compositional bias: polar residues; sequence TSASPATPGSEA. Residues 306 to 326 show a composition bias toward low complexity; that stretch reads NSTSSTPSPSSSTSETINTSG.

The protein belongs to the Antp homeobox family. Labial subfamily.

It is found in the nucleus. Functionally, sequence-specific transcription factor. Part of a developmental regulatory system that provides cells with specific positional identities on the anterior-posterior axis. Acts on the anterior body structures. Seems to act in the maintenance and/or generation of hindbrain segments. The polypeptide is Homeobox protein Hox-A1 (HOXA1) (Heterodontus francisci (Horn shark)).